Here is a 182-residue protein sequence, read N- to C-terminus: CDP-diacylglycerol--glycerol-3-phosphate 3-phosphatidyltransferase (182 aa).

The Cytoplasmic portion of the chain corresponds to 2 to 12; sequence QFNIPTLLTLF. Residues 13 to 37 form a helical membrane-spanning segment; it reads RVALIPFFVLAFYLPFVWAPLLCAL. Residues 38 to 60 are Periplasmic-facing; it reads IFVFAAVTDWFDGFLARRWKQTT. The chain crosses the membrane as a helical span at residues 61–81; sequence RFGAFLDPVADKVMVAVALVL. Over 82–86 the chain is Cytoplasmic; it reads VAEYY. The chain crosses the membrane as a helical span at residues 87 to 107; that stretch reads HSWWITLPAATMIAREIIISA. Over 108–145 the chain is Periplasmic; sequence LREWMAEIGKRSSVAVSWIGKVKTTAQMMALFALLWRP. The chain crosses the membrane as a helical span at residues 146 to 168; that stretch reads ERIVEGIGVAALYIAAVLTFWSM. Residues 169–181 lie on the Cytoplasmic side of the membrane; the sequence is FQYLNAARHDLLE.

Belongs to the CDP-alcohol phosphatidyltransferase class-I family.

It is found in the cell inner membrane. It carries out the reaction a CDP-1,2-diacyl-sn-glycerol + sn-glycerol 3-phosphate = a 1,2-diacyl-sn-glycero-3-phospho-(1'-sn-glycero-3'-phosphate) + CMP + H(+). It participates in phospholipid metabolism; phosphatidylglycerol biosynthesis; phosphatidylglycerol from CDP-diacylglycerol: step 1/2. Its function is as follows. Catalyzes the conversion of cytidine diphosphate diacylglycerol (CDP-DG) and glycerol 3-phosphate into phosphatidylglycerol. Essential for the synthesis of anionic phospholipids, thereby playing a role in balancing the ratio of zwitterionic and anionic phospholipids, which is thought to be important for normal membrane function. The protein is CDP-diacylglycerol--glycerol-3-phosphate 3-phosphatidyltransferase of Pectobacterium atrosepticum (strain SCRI 1043 / ATCC BAA-672) (Erwinia carotovora subsp. atroseptica).